We begin with the raw amino-acid sequence, 607 residues long: MNKEERAKRQSKIRNFSIIAHIDHGKSTLADRILEKTNALTQREMKAQLLDSMDLERERGITIKLNAVQLNYKAKDGEEYILHLIDTPGHVDFTYEVSRSLAACEGAILVVDAAQGIEAQTLANVYLALDNNLEILPVINKIDLPSADPERVRQEVEDVIGLDASEAVLASAKAGIGIEEILEQIVEKVPAPTGDSEEPLQCMIFDSLYDPYRGVIAYIRVVNGTVKVGDKVRMMATGKEFEVTEVGVFTPKTTQRDELTVGDVGFLAASIKNVGDTRVGDTITHAKRPAAEPLAGYRKLNPMVFCGLYPIDSARYNDLRDALEKLELNDSALEFEPETSQALGFGFRCGFLGLLHMEIIQERIEREFKIDLITTAPSVIYKVFLTNGEDMIVDNPSNMPDPQIIDRVEEPFVKAAIMVPNDYVGAVMEICQGKRGTFIDMQYLDETRVTLTYEIPLSEIVYDFFDQLKSNTKGYASFDYELIGYKPSKLVKMDILLNSEQVDALSFIVHRDSAYDRGKVIVEKLKELIPRQQFEVPIQATIGNKVVARSTIKAMRKNVLAKCYGGDISRKRKLLDKQKEGKKRMKSVGSVEVPQEAFMAVLKMDDN.

Residues 11 to 193 (SKIRNFSIIA…QIVEKVPAPT (183 aa)) enclose the tr-type G domain. GTP-binding positions include 23–28 (DHGKST) and 140–143 (NKID).

Belongs to the TRAFAC class translation factor GTPase superfamily. Classic translation factor GTPase family. LepA subfamily.

It is found in the cell membrane. The enzyme catalyses GTP + H2O = GDP + phosphate + H(+). In terms of biological role, required for accurate and efficient protein synthesis under certain stress conditions. May act as a fidelity factor of the translation reaction, by catalyzing a one-codon backward translocation of tRNAs on improperly translocated ribosomes. Back-translocation proceeds from a post-translocation (POST) complex to a pre-translocation (PRE) complex, thus giving elongation factor G a second chance to translocate the tRNAs correctly. Binds to ribosomes in a GTP-dependent manner. The chain is Elongation factor 4 from Bacillus cereus (strain ZK / E33L).